A 508-amino-acid polypeptide reads, in one-letter code: UDP-N-acetylmuramoyl-L-alanyl-D-glutamate--2,6-diaminopimelate ligase (508 aa).

Ser-43 serves as a coordination point for UDP-N-acetyl-alpha-D-muramoyl-L-alanyl-D-glutamate. 124–130 (GTNGKTT) is an ATP binding site. UDP-N-acetyl-alpha-D-muramoyl-L-alanyl-D-glutamate-binding positions include 166–167 (TT), Ser-193, and Arg-201. An N6-carboxylysine modification is found at Lys-233. Residues Arg-404, 428–431 (DNPR), Gly-478, and Glu-482 each bind meso-2,6-diaminopimelate. Positions 428 to 431 (DNPR) match the Meso-diaminopimelate recognition motif motif.

Belongs to the MurCDEF family. MurE subfamily. The cofactor is Mg(2+). Post-translationally, carboxylation is probably crucial for Mg(2+) binding and, consequently, for the gamma-phosphate positioning of ATP.

It is found in the cytoplasm. The enzyme catalyses UDP-N-acetyl-alpha-D-muramoyl-L-alanyl-D-glutamate + meso-2,6-diaminopimelate + ATP = UDP-N-acetyl-alpha-D-muramoyl-L-alanyl-gamma-D-glutamyl-meso-2,6-diaminopimelate + ADP + phosphate + H(+). Its pathway is cell wall biogenesis; peptidoglycan biosynthesis. In terms of biological role, catalyzes the addition of meso-diaminopimelic acid to the nucleotide precursor UDP-N-acetylmuramoyl-L-alanyl-D-glutamate (UMAG) in the biosynthesis of bacterial cell-wall peptidoglycan. The sequence is that of UDP-N-acetylmuramoyl-L-alanyl-D-glutamate--2,6-diaminopimelate ligase from Chlorobaculum tepidum (strain ATCC 49652 / DSM 12025 / NBRC 103806 / TLS) (Chlorobium tepidum).